The primary structure comprises 155 residues: SsrA-binding protein (155 aa).

The protein belongs to the SmpB family.

It is found in the cytoplasm. Its function is as follows. Required for rescue of stalled ribosomes mediated by trans-translation. Binds to transfer-messenger RNA (tmRNA), required for stable association of tmRNA with ribosomes. tmRNA and SmpB together mimic tRNA shape, replacing the anticodon stem-loop with SmpB. tmRNA is encoded by the ssrA gene; the 2 termini fold to resemble tRNA(Ala) and it encodes a 'tag peptide', a short internal open reading frame. During trans-translation Ala-aminoacylated tmRNA acts like a tRNA, entering the A-site of stalled ribosomes, displacing the stalled mRNA. The ribosome then switches to translate the ORF on the tmRNA; the nascent peptide is terminated with the 'tag peptide' encoded by the tmRNA and targeted for degradation. The ribosome is freed to recommence translation, which seems to be the essential function of trans-translation. This Helicobacter hepaticus (strain ATCC 51449 / 3B1) protein is SsrA-binding protein.